The primary structure comprises 161 residues: MTRKAIYPGTFDPMTNGHLDLVTRASLMFDHVILAIAASPSKKPLFTLDERVALASQVTSHLDNVEVLGFSELMAHFAAHQNANILVRGLRAVSDFEYELQLANMNRHLMPTLESVFLMPSEEWSFISSSLVKEVARHGGDIAPFLPAVVTQALFEKLAAQ.

Threonine 10 provides a ligand contact to substrate. Residues 10–11 and histidine 18 contribute to the ATP site; that span reads TF. Positions 42, 74, and 88 each coordinate substrate. ATP-binding positions include 89 to 91, glutamate 99, and 124 to 130; these read GLR and WSFISSS.

The protein belongs to the bacterial CoaD family. As to quaternary structure, homohexamer. It depends on Mg(2+) as a cofactor.

The protein localises to the cytoplasm. The enzyme catalyses (R)-4'-phosphopantetheine + ATP + H(+) = 3'-dephospho-CoA + diphosphate. It participates in cofactor biosynthesis; coenzyme A biosynthesis; CoA from (R)-pantothenate: step 4/5. In terms of biological role, reversibly transfers an adenylyl group from ATP to 4'-phosphopantetheine, yielding dephospho-CoA (dPCoA) and pyrophosphate. The sequence is that of Phosphopantetheine adenylyltransferase from Serratia proteamaculans (strain 568).